The chain runs to 810 residues: Lon protease (810 aa).

The 195-residue stretch at 32-226 folds into the Lon N-terminal domain; sequence LPAIAMRSNM…RILDILARET (195 aa). Residue 376–383 coordinates ATP; it reads GPPGVGKT. The Lon proteolytic domain maps to 612 to 791; the sequence is KPMIGVTTGL…EEVLEVALNE (180 aa). Catalysis depends on residues Ser-697 and Lys-740.

It belongs to the peptidase S16 family. Homohexamer. Organized in a ring with a central cavity.

It is found in the cytoplasm. It carries out the reaction Hydrolysis of proteins in presence of ATP.. Functionally, ATP-dependent serine protease that mediates the selective degradation of mutant and abnormal proteins as well as certain short-lived regulatory proteins. Required for cellular homeostasis and for survival from DNA damage and developmental changes induced by stress. Degrades polypeptides processively to yield small peptide fragments that are 5 to 10 amino acids long. Binds to DNA in a double-stranded, site-specific manner. The polypeptide is Lon protease (Fervidobacterium nodosum (strain ATCC 35602 / DSM 5306 / Rt17-B1)).